The chain runs to 343 residues: S-adenosylmethionine:tRNA ribosyltransferase-isomerase (343 aa).

It belongs to the QueA family. Monomer.

It localises to the cytoplasm. The enzyme catalyses 7-aminomethyl-7-carbaguanosine(34) in tRNA + S-adenosyl-L-methionine = epoxyqueuosine(34) in tRNA + adenine + L-methionine + 2 H(+). It participates in tRNA modification; tRNA-queuosine biosynthesis. Transfers and isomerizes the ribose moiety from AdoMet to the 7-aminomethyl group of 7-deazaguanine (preQ1-tRNA) to give epoxyqueuosine (oQ-tRNA). The polypeptide is S-adenosylmethionine:tRNA ribosyltransferase-isomerase (Dehalococcoides mccartyi (strain CBDB1)).